The sequence spans 691 residues: Elongation factor G (691 aa).

Positions 8–283 (EDYRNIGIMA…AVVDFLPSPL (276 aa)) constitute a tr-type G domain. GTP is bound by residues 17 to 24 (AHIDAGKT), 81 to 85 (DTPGH), and 135 to 138 (NKMD).

This sequence belongs to the TRAFAC class translation factor GTPase superfamily. Classic translation factor GTPase family. EF-G/EF-2 subfamily.

The protein resides in the cytoplasm. Functionally, catalyzes the GTP-dependent ribosomal translocation step during translation elongation. During this step, the ribosome changes from the pre-translocational (PRE) to the post-translocational (POST) state as the newly formed A-site-bound peptidyl-tRNA and P-site-bound deacylated tRNA move to the P and E sites, respectively. Catalyzes the coordinated movement of the two tRNA molecules, the mRNA and conformational changes in the ribosome. This Parvibaculum lavamentivorans (strain DS-1 / DSM 13023 / NCIMB 13966) protein is Elongation factor G.